A 129-amino-acid polypeptide reads, in one-letter code: Small ribosomal subunit protein uS11 (129 aa).

The protein belongs to the universal ribosomal protein uS11 family. Part of the 30S ribosomal subunit. Interacts with proteins S7 and S18. Binds to IF-3.

Functionally, located on the platform of the 30S subunit, it bridges several disparate RNA helices of the 16S rRNA. Forms part of the Shine-Dalgarno cleft in the 70S ribosome. The polypeptide is Small ribosomal subunit protein uS11 (Lactobacillus delbrueckii subsp. bulgaricus (strain ATCC 11842 / DSM 20081 / BCRC 10696 / JCM 1002 / NBRC 13953 / NCIMB 11778 / NCTC 12712 / WDCM 00102 / Lb 14)).